The sequence spans 567 residues: Thiol:disulfide interchange protein DsbD (567 aa).

The N-terminal stretch at 1 to 19 is a signal peptide; it reads MAQRIFTLILLLCSTSAFA. Intrachain disulfides connect cysteine 122–cysteine 128 and cysteine 185–cysteine 307. 8 helical membrane-spanning segments follow: residues 166 to 186, 211 to 231, 246 to 266, 299 to 319, 326 to 346, 360 to 380, 387 to 407, and 418 to 438; these read LPFSALWALLIGIGIAFTPCV, LLAFIYVQGMALTYTALGLVV, YVLIGLAIVFTLLALSMFGLF, IAGLICSPCTTAPLSAILLYI, WLGGGTLYLYALGMGLPLMLV, WMAHVKTAFGFVILALPVFLL, AWGLRLWSLLGVAFFGWAFIT, and IVQIILLAAALISVRPLQDWA. A Thioredoxin domain is found at 435 to 567; that stretch reads QDWAFGSPSA…FSAHLHDRQP (133 aa). Cysteine 482 and cysteine 485 are oxidised to a cystine.

This sequence belongs to the thioredoxin family. DsbD subfamily.

It localises to the cell inner membrane. It carries out the reaction [protein]-dithiol + NAD(+) = [protein]-disulfide + NADH + H(+). The enzyme catalyses [protein]-dithiol + NADP(+) = [protein]-disulfide + NADPH + H(+). Its function is as follows. Required to facilitate the formation of correct disulfide bonds in some periplasmic proteins and for the assembly of the periplasmic c-type cytochromes. Acts by transferring electrons from cytoplasmic thioredoxin to the periplasm. This transfer involves a cascade of disulfide bond formation and reduction steps. The protein is Thiol:disulfide interchange protein DsbD of Salmonella paratyphi A (strain ATCC 9150 / SARB42).